Reading from the N-terminus, the 90-residue chain is UPF0223 protein lmo1058 (90 aa).

Belongs to the UPF0223 family.

This is UPF0223 protein lmo1058 from Listeria monocytogenes serovar 1/2a (strain ATCC BAA-679 / EGD-e).